The chain runs to 361 residues: Outer mitochondrial transmembrane helix translocase (361 aa).

Over 1 to 15 (MVHAEAFSRPLSRNE) the chain is Mitochondrial intermembrane. Residues 16 to 32 (VVGLIFRLTIFGAVTYF) form a helical membrane-spanning segment. Topologically, residues 33–361 (TIKWMVDAID…QSVLTHVCLD (329 aa)) are cytoplasmic. 133-140 (GPPGCGKT) is a binding site for ATP. Phosphoserine is present on Ser322.

The protein belongs to the AAA ATPase family. MSP1 subfamily. As to quaternary structure, interacts with GRIA2 and GRIP1 in an ATP-dependent manner. ATAD1-catalyzed ATP hydrolysis disrupts not only its binding to GRIA2 and GRIP1, but also interaction between GRIP1 and GRIA2, leading to AMPAR complex disassembly.

The protein localises to the mitochondrion outer membrane. Its subcellular location is the peroxisome membrane. The protein resides in the postsynaptic cell membrane. It carries out the reaction [protein]-with a C-terminal TM segment(out) + ATP + H2O = [protein]-with a C-terminal TM segment(in) + ADP + phosphate + H(+). Outer mitochondrial translocase required to remove mislocalized tail-anchored transmembrane proteins on mitochondria. Specifically recognizes and binds tail-anchored transmembrane proteins: acts as a dislocase that mediates the ATP-dependent extraction of mistargeted tail-anchored transmembrane proteins from the mitochondrion outer membrane. Also plays a critical role in regulating the surface expression of AMPA receptors (AMPAR), thereby regulating synaptic plasticity and learning and memory. Required for NMDA-stimulated AMPAR internalization and inhibition of GRIA1 and GRIA2 recycling back to the plasma membrane; these activities are ATPase-dependent. This Rattus norvegicus (Rat) protein is Outer mitochondrial transmembrane helix translocase.